Reading from the N-terminus, the 325-residue chain is GMP reductase (325 aa).

The active-site Thioimidate intermediate is cysteine 174. 203–226 (LIADGGIRTHGDIAKSIRFGASMV) is an NADP(+) binding site.

It belongs to the IMPDH/GMPR family. GuaC type 2 subfamily.

The catalysed reaction is IMP + NH4(+) + NADP(+) = GMP + NADPH + 2 H(+). Catalyzes the irreversible NADPH-dependent deamination of GMP to IMP. It functions in the conversion of nucleobase, nucleoside and nucleotide derivatives of G to A nucleotides, and in maintaining the intracellular balance of A and G nucleotides. This is GMP reductase from Staphylococcus aureus (strain JH9).